We begin with the raw amino-acid sequence, 352 residues long: UDP-N-acetylglucosamine--N-acetylmuramyl-(pentapeptide) pyrophosphoryl-undecaprenol N-acetylglucosamine transferase (352 aa).

Residues serine 195 and glutamine 287 each coordinate UDP-N-acetyl-alpha-D-glucosamine.

The protein belongs to the glycosyltransferase 28 family. MurG subfamily.

The protein localises to the cell membrane. It carries out the reaction Mur2Ac(oyl-L-Ala-gamma-D-Glu-L-Lys-D-Ala-D-Ala)-di-trans,octa-cis-undecaprenyl diphosphate + UDP-N-acetyl-alpha-D-glucosamine = beta-D-GlcNAc-(1-&gt;4)-Mur2Ac(oyl-L-Ala-gamma-D-Glu-L-Lys-D-Ala-D-Ala)-di-trans,octa-cis-undecaprenyl diphosphate + UDP + H(+). The protein operates within cell wall biogenesis; peptidoglycan biosynthesis. Its function is as follows. Cell wall formation. Catalyzes the transfer of a GlcNAc subunit on undecaprenyl-pyrophosphoryl-MurNAc-pentapeptide (lipid intermediate I) to form undecaprenyl-pyrophosphoryl-MurNAc-(pentapeptide)GlcNAc (lipid intermediate II). The polypeptide is UDP-N-acetylglucosamine--N-acetylmuramyl-(pentapeptide) pyrophosphoryl-undecaprenol N-acetylglucosamine transferase (Streptococcus pneumoniae (strain JJA)).